A 146-amino-acid chain; its full sequence is MEKIDIFTDGACKGNPGRGGWGALLVMGEREKELFGGEPGTTNNRMELKAVIEALNALTRPCEVIVHTDSQYVQKGISEWIHGWKARGWKTAARAPVKNVDLWQALDAAQARHQIEWRWVRGHNGHVGNERADALANRGVETVNSN.

In terms of domain architecture, RNase H type-1 spans 1 to 141 (MEKIDIFTDG…ADALANRGVE (141 aa)). The Mg(2+) site is built by D9, E47, D69, and D133.

This sequence belongs to the RNase H family. As to quaternary structure, monomer. Requires Mg(2+) as cofactor.

It localises to the cytoplasm. The catalysed reaction is Endonucleolytic cleavage to 5'-phosphomonoester.. Its function is as follows. Endonuclease that specifically degrades the RNA of RNA-DNA hybrids. The polypeptide is Ribonuclease H (Herminiimonas arsenicoxydans).